A 211-amino-acid polypeptide reads, in one-letter code: Ferritin heavy chain (211 aa).

The first 20 residues, 1 to 20 (MNSILLVFAGILAVCLPASA), serve as a signal peptide directing secretion. Residues 35–191 (ITMHRSCRNS…GKASTLKKLM (157 aa)) form the Ferritin-like diiron domain. A disulfide bond links Cys41 and Cys150. Positions 52, 87, 90, 136, and 173 each coordinate Fe cation.

This sequence belongs to the ferritin family. In terms of assembly, oligomer of 12 light (L) chains and 12 heavy (H) chains; L and H chains are disulfide-linked. The functional molecule forms a roughly spherical shell with a diameter of 12 nm and contains a central cavity into which the insoluble ferric iron core is deposited.

The protein resides in the golgi apparatus. It is found in the secreted. The enzyme catalyses 4 Fe(2+) + O2 + 4 H(+) = 4 Fe(3+) + 2 H2O. Stores iron in a soluble, non-toxic, readily available form. Important for iron homeostasis. Iron is taken up in the ferrous form and deposited as ferric hydroxides after oxidation. Ferritin is composed of a heavy (H) chain which is responsible for the oxidation and uptake of ferrous iron, and a light (L) chain which facilitates the nucleation of the ferrihydrite iron core. The sequence is that of Ferritin heavy chain from Trichoplusia ni (Cabbage looper).